The chain runs to 206 residues: High frequency lysogenization protein HflD homolog (206 aa).

The protein belongs to the HflD family.

It localises to the cytoplasm. Its subcellular location is the cell inner membrane. The sequence is that of High frequency lysogenization protein HflD homolog from Idiomarina loihiensis (strain ATCC BAA-735 / DSM 15497 / L2-TR).